The chain runs to 806 residues: Dimethyl sulfoxide reductase DmsA (806 aa).

Positions 1–35 form a signal peptide, tat-type signal; that stretch reads MSNFNQISRRDFVKASSAGAALAVSNLTLPFNVMA. Residues 47–109 enclose the 4Fe-4S Mo/W bis-MGD-type domain; it reads ERIVWSACTV…SMRRRVYNPD (63 aa). Positions 54, 58, 62, and 95 each coordinate [4Fe-4S] cluster. Mo-bis(molybdopterin guanine dinucleotide) is bound by residues 163–167, Ser-196, 236–237, 262–263, 283–285, 378–379, Arg-382, Asn-480, 504–505, His-693, 699–701, Asn-780, and 796–797; these read LGGTM, ET, ID, GTD, WG, HST, and QH. Residues 786–806 form a disordered region; the sequence is RPSPLAKGNPQHSNLVQVERL. Polar residues predominate over residues 795–806; the sequence is PQHSNLVQVERL.

It belongs to the prokaryotic molybdopterin-containing oxidoreductase family. As to quaternary structure, heterotrimeric enzyme composed of a catalytic heterodimer (DmsAB) and a membrane anchor protein (DmsC). The cofactor is [4Fe-4S] cluster. Requires Mo-bis(molybdopterin guanine dinucleotide) as cofactor. Predicted to be exported by the Tat system. The position of the signal peptide cleavage has not been experimentally proven.

The protein localises to the cell membrane. It carries out the reaction dimethyl sulfide + a menaquinone + H2O = dimethyl sulfoxide + a menaquinol. In terms of biological role, catalyzes the reduction of dimethyl sulfoxide (DMSO) to dimethyl sulfide (DMS). The terminal DMSO reductase can also use various sulfoxides and N-oxide compounds as terminal electron acceptor in addition to DMSO. The chain is Dimethyl sulfoxide reductase DmsA (dmsA) from Haemophilus influenzae (strain ATCC 51907 / DSM 11121 / KW20 / Rd).